Reading from the N-terminus, the 430-residue chain is Adenylosuccinate synthetase (430 aa).

Residues 12-18 and 40-42 each bind GTP; these read GDEGKGK and GHT. Catalysis depends on Asp-13, which acts as the Proton acceptor. Positions 13 and 40 each coordinate Mg(2+). IMP-binding positions include 13 to 16, 38 to 41, Thr-128, Arg-142, Gln-223, Thr-238, and Arg-302; these read DEGK and NAGH. His-41 acts as the Proton donor in catalysis. A substrate-binding site is contributed by 298–304; it reads TTTGRPR. Residues Arg-304, 330 to 332, and 412 to 414 contribute to the GTP site; these read SID and SVG.

Belongs to the adenylosuccinate synthetase family. As to quaternary structure, homodimer. The cofactor is Mg(2+).

It is found in the cytoplasm. It carries out the reaction IMP + L-aspartate + GTP = N(6)-(1,2-dicarboxyethyl)-AMP + GDP + phosphate + 2 H(+). It participates in purine metabolism; AMP biosynthesis via de novo pathway; AMP from IMP: step 1/2. Its function is as follows. Plays an important role in the de novo pathway of purine nucleotide biosynthesis. Catalyzes the first committed step in the biosynthesis of AMP from IMP. This Streptococcus equi subsp. zooepidemicus (strain H70) protein is Adenylosuccinate synthetase.